A 179-amino-acid chain; its full sequence is Bifunctional protein PyrR (179 aa).

Substrate is bound by residues 39–40, 101–109, arginine 134, and valine 158; these read RR and DDVLFTGRT. The short motif at 97 to 109 is the PRPP-binding element; sequence VILIDDVLFTGRT.

Belongs to the purine/pyrimidine phosphoribosyltransferase family. PyrR subfamily.

The catalysed reaction is UMP + diphosphate = 5-phospho-alpha-D-ribose 1-diphosphate + uracil. Its function is as follows. Regulates the transcription of the pyrimidine nucleotide (pyr) operon in response to exogenous pyrimidines. Functionally, also displays a weak uracil phosphoribosyltransferase activity which is not physiologically significant. In Haemophilus ducreyi (strain 35000HP / ATCC 700724), this protein is Bifunctional protein PyrR.